A 274-amino-acid polypeptide reads, in one-letter code: NADPH-dependent 7-cyano-7-deazaguanine reductase (274 aa).

A substrate-binding site is contributed by V80–S82. S82–K83 lines the NADPH pocket. The active-site Thioimide intermediate is the C181. Residue D188 is the Proton donor of the active site. H220–E221 contacts substrate. R249 to G250 is a binding site for NADPH.

This sequence belongs to the GTP cyclohydrolase I family. QueF type 2 subfamily. As to quaternary structure, homodimer.

Its subcellular location is the cytoplasm. The catalysed reaction is 7-aminomethyl-7-carbaguanine + 2 NADP(+) = 7-cyano-7-deazaguanine + 2 NADPH + 3 H(+). It participates in tRNA modification; tRNA-queuosine biosynthesis. Its function is as follows. Catalyzes the NADPH-dependent reduction of 7-cyano-7-deazaguanine (preQ0) to 7-aminomethyl-7-deazaguanine (preQ1). The protein is NADPH-dependent 7-cyano-7-deazaguanine reductase of Burkholderia ambifaria (strain MC40-6).